We begin with the raw amino-acid sequence, 415 residues long: Gamma-glutamyl phosphate reductase (415 aa).

This sequence belongs to the gamma-glutamyl phosphate reductase family.

It localises to the cytoplasm. The enzyme catalyses L-glutamate 5-semialdehyde + phosphate + NADP(+) = L-glutamyl 5-phosphate + NADPH + H(+). It functions in the pathway amino-acid biosynthesis; L-proline biosynthesis; L-glutamate 5-semialdehyde from L-glutamate: step 2/2. Its function is as follows. Catalyzes the NADPH-dependent reduction of L-glutamate 5-phosphate into L-glutamate 5-semialdehyde and phosphate. The product spontaneously undergoes cyclization to form 1-pyrroline-5-carboxylate. The protein is Gamma-glutamyl phosphate reductase of Clostridium perfringens (strain 13 / Type A).